The primary structure comprises 246 residues: tRNA (guanine-N(1)-)-methyltransferase (246 aa).

S-adenosyl-L-methionine-binding positions include glycine 114 and 133 to 138 (LGDYVL).

The protein belongs to the RNA methyltransferase TrmD family. As to quaternary structure, homodimer.

The protein localises to the cytoplasm. The enzyme catalyses guanosine(37) in tRNA + S-adenosyl-L-methionine = N(1)-methylguanosine(37) in tRNA + S-adenosyl-L-homocysteine + H(+). Specifically methylates guanosine-37 in various tRNAs. This is tRNA (guanine-N(1)-)-methyltransferase from Enterococcus faecalis (strain ATCC 700802 / V583).